Consider the following 144-residue polypeptide: Large ribosomal subunit protein uL15 (144 aa).

The disordered stretch occupies residues M1–G53. The span at R21–G31 shows a compositional bias: gly residues.

The protein belongs to the universal ribosomal protein uL15 family. As to quaternary structure, part of the 50S ribosomal subunit.

Its function is as follows. Binds to the 23S rRNA. This is Large ribosomal subunit protein uL15 from Sodalis glossinidius (strain morsitans).